The following is a 203-amino-acid chain: Guanylate kinase (203 aa).

The Guanylate kinase-like domain occupies 5–183; it reads GVLYIISAPS…AVEELKSVVV (179 aa). An ATP-binding site is contributed by 12-19; sequence APSGAGKT.

This sequence belongs to the guanylate kinase family.

It is found in the cytoplasm. The enzyme catalyses GMP + ATP = GDP + ADP. Functionally, essential for recycling GMP and indirectly, cGMP. The chain is Guanylate kinase from Geobacter metallireducens (strain ATCC 53774 / DSM 7210 / GS-15).